The primary structure comprises 86 residues: uncharacterized protein (86 aa).

A run of 2 helical transmembrane segments spans residues 20 to 38 (IQFW…SVYL) and 47 to 63 (FSTF…TKGV). The interval 67-86 (LSQRREQGKEQGREQGREQE) is disordered. Residues 69-86 (QRREQGKEQGREQGREQE) show a composition bias toward basic and acidic residues.

The protein localises to the cell membrane. This is an uncharacterized protein from Haemophilus influenzae (strain ATCC 51907 / DSM 11121 / KW20 / Rd).